The chain runs to 227 residues: Endo-1,4-beta-xylanase 1 (227 aa).

The N-terminal stretch at 1-19 (MVSLKSVLAAATAVSSAIA) is a signal peptide. One can recognise a GH11 domain in the interval 37-225 (QVTPNAEGWH…SSGESDIYVQ (189 aa)). Catalysis depends on Glu-121, which acts as the Nucleophile. Glu-212 (proton donor) is an active-site residue.

The protein belongs to the glycosyl hydrolase 11 (cellulase G) family.

It catalyses the reaction Endohydrolysis of (1-&gt;4)-beta-D-xylosidic linkages in xylans.. The protein operates within glycan degradation; xylan degradation. The sequence is that of Endo-1,4-beta-xylanase 1 from Humicola insolens (Soft-rot fungus).